Reading from the N-terminus, the 3511-residue chain is Unconventional myosin-XV (3511 aa).

Disordered stretches follow at residues 1–44 (MADE…TPKI), 574–690 (KKPI…SLRQ), 712–1030 (FAEP…PNKN), and 1105–1135 (VSSF…PQAC). A compositionally biased stretch (polar residues) spans 622 to 634 (SQPQARNNNNSHG). Residues 654–672 (PPMPAPSPSPASPLTPPFS) show a composition bias toward pro residues. Positions 769 to 792 (PSLRSLPGQGYHSPLGPLSPQLSL) are enriched in low complexity. The segment covering 797-807 (FQPPFPPPPRR) has biased composition (pro residues). In terms of domain architecture, Myosin motor spans 1206-1883 (DGVEDMTQLE…LHQLLESMRE (678 aa)). Position 1299–1306 (1299–1306 (GESGSGKT)) interacts with ATP. The stretch at 1307 to 1334 (EATKLILRCLAAMNQRRDVMQQIKILEA) forms a coiled coil. Residues 1776–1783 (FVRCLKPN) are actin-binding. The interval 1872 to 2013 (EHLHQLLESM…SSGPRVAVVR (142 aa)) is neck or regulatory domain. IQ domains lie at 1886–1908 (QNRA…HFRS) and 1909–1938 (LRRK…SLLK). The tail stretch occupies residues 2014–3511 (APRLQAEPCV…TLPPSEITLL (1498 aa)). The MyTH4 1 domain occupies 2049 to 2195 (MLTVPLKMPL…PTQLEWTAIQ (147 aa)). Disordered stretches follow at residues 2330–2359 (SHKE…GEST), 2392–2425 (YRMK…PIPG), 2460–2509 (PLSA…SVAK), 2565–2584 (KQPP…GKVF), and 2629–2648 (RPCM…PPED). The segment covering 2337 to 2351 (NGETEAQRWTSNRQA) has biased composition (polar residues). Residues 2395–2406 (KGGGQPGGGGGS) are compositionally biased toward gly residues. The segment covering 2410-2420 (DTSRRPPEPKL) has biased composition (basic and acidic residues). Positions 2573-2584 (PEARRTDGGKVF) are enriched in basic and acidic residues. One can recognise an SH3 domain in the interval 2848–2934 (KDSDYVVAVR…PSELVQPAAA (87 aa)). The interval 2964-2984 (EVGRRREGPPVRARSADSGED) is disordered. Residues 2965–2980 (VGRRREGPPVRARSAD) show a composition bias toward basic and acidic residues. One can recognise a MyTH4 2 domain in the interval 3031–3185 (FTKVPIQESL…PSNMELRAML (155 aa)). Residues 3190 to 3511 (SKRQLFLLPG…TLPPSEITLL (322 aa)) enclose the FERM domain.

Belongs to the TRAFAC class myosin-kinesin ATPase superfamily. Myosin family. In terms of assembly, interacts with the third PDZ domain of WHRN which is necessary for localization of WHRN to stereocilium tips. Interacts with FASLG. Interacts with EPS8. In the developing inner ear, expressed in cochlea and vestibular apparatus. Expression appears to be restricted to cochlear neurosensory cells and upper epithelial layer of macula saccula. Also expressed in macula utriculi and cristae ampullaris of the semicircular canals. In adult cochlear hair cells, highest expression in stereocilia and apical body.

Its subcellular location is the cell projection. It is found in the stereocilium. The protein localises to the cytoplasm. It localises to the cytoskeleton. Its function is as follows. Myosins are actin-based motor molecules with ATPase activity. Unconventional myosins serve in intracellular movements. Their highly divergent tails are presumed to bind to membranous compartments, which would be moved relative to actin filaments. Required for the arrangement of stereocilia in mature hair bundles. In Mus musculus (Mouse), this protein is Unconventional myosin-XV (Myo15a).